The following is a 70-amino-acid chain: Small ribosomal subunit protein eS17 (70 aa).

The protein belongs to the eukaryotic ribosomal protein eS17 family.

This chain is Small ribosomal subunit protein eS17, found in Methanopyrus kandleri (strain AV19 / DSM 6324 / JCM 9639 / NBRC 100938).